The sequence spans 483 residues: Glutamyl-tRNA(Gln) amidotransferase subunit A (483 aa).

Residues Lys77 and Ser152 each act as charge relay system in the active site. Ser176 serves as the catalytic Acyl-ester intermediate.

This sequence belongs to the amidase family. GatA subfamily. In terms of assembly, heterotrimer of A, B and C subunits.

It catalyses the reaction L-glutamyl-tRNA(Gln) + L-glutamine + ATP + H2O = L-glutaminyl-tRNA(Gln) + L-glutamate + ADP + phosphate + H(+). Functionally, allows the formation of correctly charged Gln-tRNA(Gln) through the transamidation of misacylated Glu-tRNA(Gln) in organisms which lack glutaminyl-tRNA synthetase. The reaction takes place in the presence of glutamine and ATP through an activated gamma-phospho-Glu-tRNA(Gln). The polypeptide is Glutamyl-tRNA(Gln) amidotransferase subunit A (Listeria monocytogenes serotype 4a (strain HCC23)).